The following is a 634-amino-acid chain: Chaperone protein dnaK2 (634 aa).

Position 197 is a phosphothreonine; by autocatalysis (Thr197). The segment covering 601 to 620 (SAEASANAQAGPSSSSSSSS) has biased composition (low complexity). The interval 601-634 (SAEASANAQAGPSSSSSSSSGDDDVIDAEFSESK) is disordered. The span at 621–634 (GDDDVIDAEFSESK) shows a compositional bias: acidic residues.

The protein belongs to the heat shock protein 70 family.

Functionally, acts as a chaperone. This chain is Chaperone protein dnaK2 (dnaK2), found in Synechococcus elongatus (strain ATCC 33912 / PCC 7942 / FACHB-805) (Anacystis nidulans R2).